A 431-amino-acid polypeptide reads, in one-letter code: Putative malic acid transport protein (431 aa).

10 helical membrane passes run 30 to 50 (FTWA…VTSL), 62 to 82 (GKII…CITF), 101 to 121 (VLFM…LYPY), 136 to 156 (ILYW…FYSL), 167 to 187 (IIPA…IASA), 201 to 221 (VVAG…VYAV), 239 to 259 (GMFI…DLAF), 284 to 304 (FMAL…FVSV), 318 to 338 (VSWF…QELG), and 346 to 366 (VCIV…ILIL). Residues 402–424 (EEEKDEAERSKRKAEESDGKTTR) are compositionally biased toward basic and acidic residues. A disordered region spans residues 402–431 (EEEKDEAERSKRKAEESDGKTTRELTSGGL).

The protein belongs to the tellurite-resistance/dicarboxylate transporter (TDT) family.

The protein resides in the membrane. In Schizosaccharomyces pombe (strain 972 / ATCC 24843) (Fission yeast), this protein is Putative malic acid transport protein.